Reading from the N-terminus, the 1221-residue chain is DNA-directed RNA polymerase subunit beta' (1221 aa).

The Zn(2+) site is built by C60, C62, C75, and C78. D449, D451, and D453 together coordinate Mg(2+). Positions 821, 896, 903, and 906 each coordinate Zn(2+).

The protein belongs to the RNA polymerase beta' chain family. In terms of assembly, the RNAP catalytic core consists of 2 alpha, 1 beta, 1 beta' and 1 omega subunit. When a sigma factor is associated with the core the holoenzyme is formed, which can initiate transcription. Mg(2+) is required as a cofactor. The cofactor is Zn(2+).

The catalysed reaction is RNA(n) + a ribonucleoside 5'-triphosphate = RNA(n+1) + diphosphate. In terms of biological role, DNA-dependent RNA polymerase catalyzes the transcription of DNA into RNA using the four ribonucleoside triphosphates as substrates. The chain is DNA-directed RNA polymerase subunit beta' from Lactobacillus delbrueckii subsp. bulgaricus (strain ATCC 11842 / DSM 20081 / BCRC 10696 / JCM 1002 / NBRC 13953 / NCIMB 11778 / NCTC 12712 / WDCM 00102 / Lb 14).